A 71-amino-acid polypeptide reads, in one-letter code: uncharacterized protein (71 aa).

A disordered region spans residues 1–20; sequence MQKLNKHLKKKKQKRKKMKK.

This is an uncharacterized protein from Methanocaldococcus jannaschii (strain ATCC 43067 / DSM 2661 / JAL-1 / JCM 10045 / NBRC 100440) (Methanococcus jannaschii).